A 459-amino-acid polypeptide reads, in one-letter code: Probable D-serine dehydratase (459 aa).

Residue Lys119 is modified to N6-(pyridoxal phosphate)lysine.

This sequence belongs to the serine/threonine dehydratase family. DsdA subfamily. Requires pyridoxal 5'-phosphate as cofactor.

It catalyses the reaction D-serine = pyruvate + NH4(+). The chain is Probable D-serine dehydratase from Geobacillus stearothermophilus (Bacillus stearothermophilus).